The following is a 326-amino-acid chain: Tetraacyldisaccharide 4'-kinase (326 aa).

52 to 59 (TLGGAGKT) provides a ligand contact to ATP.

This sequence belongs to the LpxK family.

The catalysed reaction is a lipid A disaccharide + ATP = a lipid IVA + ADP + H(+). The protein operates within glycolipid biosynthesis; lipid IV(A) biosynthesis; lipid IV(A) from (3R)-3-hydroxytetradecanoyl-[acyl-carrier-protein] and UDP-N-acetyl-alpha-D-glucosamine: step 6/6. Its function is as follows. Transfers the gamma-phosphate of ATP to the 4'-position of a tetraacyldisaccharide 1-phosphate intermediate (termed DS-1-P) to form tetraacyldisaccharide 1,4'-bis-phosphate (lipid IVA). In Methylobacterium radiotolerans (strain ATCC 27329 / DSM 1819 / JCM 2831 / NBRC 15690 / NCIMB 10815 / 0-1), this protein is Tetraacyldisaccharide 4'-kinase.